The chain runs to 583 residues: Pre-mRNA-processing protein PRP40 (583 aa).

2 consecutive WW domains span residues Met-1 to Glu-31 and Glu-42 to Phe-72. 6 consecutive FF domains span residues Lys-132–Asn-188, Thr-201–Thr-257, Gln-262–Ile-332, Arg-354–Glu-413, Gln-427–Asn-488, and Arg-491–Glu-552. Thr-576 is modified (phosphothreonine).

This sequence belongs to the PRPF40 family. In terms of assembly, interacts with CRM1, MSL5, PRP8, and the RNA polymerase II largest subunit (RPB1). MSL5, MUD2 and PRP40 interact to form the commitment complex 2 (CC2), a precursor of mature spliceosomes.

The protein localises to the nucleus. Required for pre-spliceosome formation, which is the first step of pre-mRNA splicing. This protein is associated with snRNP U1. Two commitment complexes, CC1 and CC2, have been defined in yeast. CC1 is a basal complex dependent only on the 5' splice site. CC2 is a complex of lower mobility and is dependent on a branchpoint as well as a 5' splice site region. This protein is involved in CC2 formation where it binds to the branchpoint binding protein MSL5, bridging the U1 snRNP-associated 5' splice site and the MSL5-associated branch point 3' intron splice site. The protein is Pre-mRNA-processing protein PRP40 (PRP40) of Saccharomyces cerevisiae (strain ATCC 204508 / S288c) (Baker's yeast).